Here is an 858-residue protein sequence, read N- to C-terminus: Selenocysteine insertion sequence-binding protein 2 (858 aa).

Disordered regions lie at residues 127-261, 275-296, and 327-625; these read KPRH…GDVG, SDHT…CTQE, and LKKT…DSAT. Basic and acidic residues-rich tracts occupy residues 147–166, 188–197, and 215–224; these read KPSD…RRAD, SSLKSDGYHK, and PEFEFSRLDF. 2 stretches are compositionally biased toward polar residues: residues 281 to 296 and 327 to 352; these read AVTS…CTQE and LKKT…NPSY. The short motif at 380 to 387 is the Nuclear localization signal element; that stretch reads KNKKKKEK. The span at 418 to 429 shows a compositional bias: basic residues; the sequence is RRHRGQSPKLHS. The span at 430-447 shows a compositional bias: polar residues; sequence KQQTQNEFKTSGKKSQVP. Positions 539-548 are enriched in basic and acidic residues; it reads ILKERQERMQ. Polar residues-rich tracts occupy residues 554-563 and 571-582; these read SAVSLTVASD and GASNQTPSQDNP. The segment at 678-699 is RNA-binding; sequence LVLGLREVLKHLKLRKLKCIII. The disordered stretch occupies residues 785–819; the sequence is MRQEQAGEPGPQSPPSPPMQDPIPSTEEGTLPSTG. Residues 795–805 show a composition bias toward pro residues; it reads PQSPPSPPMQD.

It localises to the cytoplasm. The protein localises to the nucleus. Functionally, mRNA-binding protein that binds to the SECIS (selenocysteine insertion sequence) element present in the 3'-UTR of mRNAs encoding selenoproteins and facilitates the incorporation of the rare amino acid selenocysteine. Insertion of selenocysteine at UGA codons is mediated by SECISBP2 and EEFSEC: SECISBP2 (1) specifically binds the SECIS sequence once the 80S ribosome encounters an in-frame UGA codon and (2) contacts the RPS27A/eS31 of the 40S ribosome before ribosome stalling. (3) GTP-bound EEFSEC then delivers selenocysteinyl-tRNA(Sec) to the 80S ribosome and adopts a preaccommodated state conformation. (4) After GTP hydrolysis, EEFSEC dissociates from the assembly, selenocysteinyl-tRNA(Sec) accommodates, and peptide bond synthesis and selenoprotein elongation occur. The sequence is that of Selenocysteine insertion sequence-binding protein 2 from Mus musculus (Mouse).